Consider the following 468-residue polypeptide: Glutamate--tRNA ligase 2 (468 aa).

A 'HIGH' region motif is present at residues 9–19 (PSPTGSLHLGG). Residues 238–242 (KLSKR) carry the 'KMSKS' region motif. Lysine 241 is a binding site for ATP.

This sequence belongs to the class-I aminoacyl-tRNA synthetase family. Glutamate--tRNA ligase type 1 subfamily. Monomer.

It localises to the cytoplasm. It carries out the reaction tRNA(Glu) + L-glutamate + ATP = L-glutamyl-tRNA(Glu) + AMP + diphosphate. Its function is as follows. Catalyzes the attachment of glutamate to tRNA(Glu) in a two-step reaction: glutamate is first activated by ATP to form Glu-AMP and then transferred to the acceptor end of tRNA(Glu). The protein is Glutamate--tRNA ligase 2 of Anaplasma phagocytophilum (strain HZ).